The following is a 738-amino-acid chain: Leucine-rich repeat flightless-interacting protein 1 (738 aa).

An N-acetylthreonine modification is found at T2. Phosphoserine is present on S16. Residues 40 to 65 show a composition bias toward basic and acidic residues; sequence IRMKELERQQKEVEERPDKDFAEKGS. Residues 40 to 98 are disordered; the sequence is IRMKELERQQKEVEERPDKDFAEKGSRNMPSLSAATLASLGGTSSRRGSGDTSISMDTE. Residues 78-94 show a composition bias toward low complexity; it reads SLGGTSSRRGSGDTSIS. Phosphoserine is present on residues S83, S84, S88, and S92. Residues 94 to 194 are a coiled coil; it reads SMDTEASIRE…LRQREEMLEK (101 aa). K249 participates in a covalent cross-link: Glycyl lysine isopeptide (Lys-Gly) (interchain with G-Cter in SUMO1). Basic and acidic residues-rich tracts occupy residues 253-262 and 277-297; these read VEKVGQRETL and DCVD…RPVE. Residues 253-738 are disordered; it reads VEKVGQRETL…SKSKEDCTMS (486 aa). Phosphoserine is present on S302. The span at 314–326 shows a compositional bias: polar residues; that stretch reads EVQSQDQENTSIL. Basic and acidic residues predominate over residues 330-347; that stretch reads EQIESHEVTNKSDSRDSN. Phosphoserine is present on residues S346 and S348. Positions 371 to 380 are enriched in polar residues; the sequence is KNQSENSMDS. Basic and acidic residues-rich tracts occupy residues 381–400 and 467–476; these read QGKE…RPDH and SERELAHEAA. The tract at residues 479–580 is DNA-binding; that stretch reads EEALTQSSQA…KNKKKKAAAP (102 aa). Polar residues-rich tracts occupy residues 483 to 495 and 520 to 534; these read TQSS…NTVT and TVQS…PGST. The segment covering 535 to 553 has biased composition (basic and acidic residues); that stretch reads DTKHTSPHAKERNKAKSEQ. Phosphoserine occurs at positions 551 and 560. Residues 563–577 show a composition bias toward basic residues; sequence KKTKNKKKKNKKKKA. Over residues 606–626 the composition is skewed to basic and acidic residues; sequence RVQATDKKWAAETPELKEDPQ. Phosphoserine is present on residues S675 and S701. Basic and acidic residues-rich tracts occupy residues 691–703 and 720–738; these read QADE…HSVD and EQAR…CTMS.

Belongs to the LRRFIP family. As to quaternary structure, homodimer. May also form higher oligomers. Interacts with FLII. Interacts with MYD88. Competes with FLII for MyD88-binding, even in the absence of LPS.

Its subcellular location is the nucleus. The protein resides in the cytoplasm. Transcriptional repressor which preferentially binds to the GC-rich consensus sequence (5'-AGCCCCCGGCG-3') and may regulate expression of TNF, EGFR and PDGFA. May control smooth muscle cells proliferation following artery injury through PDGFA repression. May also bind double-stranded RNA. Positively regulates Toll-like receptor (TLR) signaling in response to agonist probably by competing with the negative FLII regulator for MYD88-binding. The protein is Leucine-rich repeat flightless-interacting protein 1 (Lrrfip1) of Rattus norvegicus (Rat).